The chain runs to 265 residues: Ribosomal RNA small subunit methyltransferase A (265 aa).

S-adenosyl-L-methionine is bound by residues H13, L15, G40, E62, D87, and N106.

The protein belongs to the class I-like SAM-binding methyltransferase superfamily. rRNA adenine N(6)-methyltransferase family. RsmA subfamily.

The protein localises to the cytoplasm. It catalyses the reaction adenosine(1518)/adenosine(1519) in 16S rRNA + 4 S-adenosyl-L-methionine = N(6)-dimethyladenosine(1518)/N(6)-dimethyladenosine(1519) in 16S rRNA + 4 S-adenosyl-L-homocysteine + 4 H(+). Functionally, specifically dimethylates two adjacent adenosines (A1518 and A1519) in the loop of a conserved hairpin near the 3'-end of 16S rRNA in the 30S particle. May play a critical role in biogenesis of 30S subunits. The polypeptide is Ribosomal RNA small subunit methyltransferase A (Persephonella marina (strain DSM 14350 / EX-H1)).